Here is a 186-residue protein sequence, read N- to C-terminus: Large ribosomal subunit protein uL5 (186 aa).

Belongs to the universal ribosomal protein uL5 family. As to quaternary structure, part of the 50S ribosomal subunit; contacts the 5S rRNA and probably tRNA. Forms a bridge to the 30S subunit in the 70S ribosome.

Its function is as follows. This is one of the proteins that bind and probably mediate the attachment of the 5S RNA into the large ribosomal subunit, where it forms part of the central protuberance. In the 70S ribosome it contacts protein S13 of the 30S subunit (bridge B1b), connecting the 2 subunits; this bridge is implicated in subunit movement. May contact the P site tRNA; the 5S rRNA and some of its associated proteins might help stabilize positioning of ribosome-bound tRNAs. This chain is Large ribosomal subunit protein uL5, found in Pyrococcus furiosus (strain ATCC 43587 / DSM 3638 / JCM 8422 / Vc1).